We begin with the raw amino-acid sequence, 609 residues long: UvrABC system protein C (609 aa).

In terms of domain architecture, GIY-YIG spans 13–91 (HQPGVYRMFD…IKAFQPRYNV (79 aa)). The region spanning 201–236 (QQVLEHLIKKMEQASMQLNFEQAAYFRDQIQAIRAV) is the UVR domain.

It belongs to the UvrC family. As to quaternary structure, interacts with UvrB in an incision complex.

The protein localises to the cytoplasm. The UvrABC repair system catalyzes the recognition and processing of DNA lesions. UvrC both incises the 5' and 3' sides of the lesion. The N-terminal half is responsible for the 3' incision and the C-terminal half is responsible for the 5' incision. This Histophilus somni (strain 129Pt) (Haemophilus somnus) protein is UvrABC system protein C.